The chain runs to 635 residues: UvrABC system protein C (635 aa).

One can recognise a GIY-YIG domain in the interval Glu20 to Ile97. One can recognise a UVR domain in the interval Lys207–Val242.

The protein belongs to the UvrC family. As to quaternary structure, interacts with UvrB in an incision complex.

The protein resides in the cytoplasm. The UvrABC repair system catalyzes the recognition and processing of DNA lesions. UvrC both incises the 5' and 3' sides of the lesion. The N-terminal half is responsible for the 3' incision and the C-terminal half is responsible for the 5' incision. The protein is UvrABC system protein C of Rickettsia bellii (strain RML369-C).